The chain runs to 184 residues: Envelope protein 169 (184 aa).

The Intravirion segment spans residues 1–6 (MKKYIK). A helical transmembrane segment spans residues 7 to 27 (MYLVLLIAIILFITILVIFLI). Topologically, residues 28–184 (SGLFYPEQNP…TVMAIPRKVL (157 aa)) are virion surface.

The protein belongs to the asfivirus envelope protein p22 family.

The protein resides in the virion membrane. Its subcellular location is the host cell membrane. This chain is Envelope protein 169, found in Ornithodoros (relapsing fever ticks).